The chain runs to 482 residues: ATP synthase subunit beta (482 aa).

162 to 169 serves as a coordination point for ATP; it reads GGAGVGKT.

Belongs to the ATPase alpha/beta chains family. In terms of assembly, F-type ATPases have 2 components, CF(1) - the catalytic core - and CF(0) - the membrane proton channel. CF(1) has five subunits: alpha(3), beta(3), gamma(1), delta(1), epsilon(1). CF(0) has four main subunits: a(1), b(1), b'(1) and c(9-12).

Its subcellular location is the cellular thylakoid membrane. The catalysed reaction is ATP + H2O + 4 H(+)(in) = ADP + phosphate + 5 H(+)(out). Produces ATP from ADP in the presence of a proton gradient across the membrane. The catalytic sites are hosted primarily by the beta subunits. In Synechococcus sp. (strain PCC 6716), this protein is ATP synthase subunit beta.